The sequence spans 137 residues: Methylglyoxal synthase (137 aa).

The 137-residue stretch at 1–137 folds into the MGS-like domain; sequence MNIALVAHDQ…EVRKSKSQRI (137 aa). Substrate is bound by residues His-8, Lys-12, 34–37, and 54–55; these read TGTT and SG. Asp-60 serves as the catalytic Proton donor/acceptor. His-87 contributes to the substrate binding site.

It belongs to the methylglyoxal synthase family.

It carries out the reaction dihydroxyacetone phosphate = methylglyoxal + phosphate. Catalyzes the formation of methylglyoxal from dihydroxyacetone phosphate. The protein is Methylglyoxal synthase of Clostridioides difficile (strain 630) (Peptoclostridium difficile).